Consider the following 257-residue polypeptide: Short chain dehydrogenase prhI (257 aa).

The chain crosses the membrane as a helical span at residues 7-29 (HVVIITGSSSGIGLAASTLALAS). Ile11 is an NADP(+) binding site. N-linked (GlcNAc...) asparagine glycosylation occurs at Asn50. Asp57 lines the NADP(+) pocket. Asn92 and Asn110 each carry an N-linked (GlcNAc...) asparagine glycan. The NADP(+) site is built by Arg119, Tyr151, Lys155, and Val184. The active-site Proton acceptor is the Tyr151. Lys155 functions as the Lowers pKa of active site Tyr in the catalytic mechanism.

It belongs to the short-chain dehydrogenases/reductases (SDR) family.

The protein resides in the membrane. It carries out the reaction protoaustinoid A + A = protoaustinoid B + AH2. The protein operates within secondary metabolite biosynthesis; terpenoid biosynthesis. In terms of biological role, short chain dehydrogenase; part of the gene cluster that mediates the biosynthesis of paraherquonin, a meroterpenoid with a unique, highly congested hexacyclic molecular architecture. The first step of the pathway is the synthesis of 3,5-dimethylorsellinic acid (DMOA) by the polyketide synthase prhL. Synthesis of DMOA is followed by farnesylation by the prenyltransferase prhE, methylesterification by the methyl-transferase prhM, epoxidation of the prenyl chain by the flavin-dependent monooxygenase prhF, and cyclization of the farnesyl moiety by the terpene cyclase prhH, to yield the tetracyclic intermediate, protoaustinoid A. The short chain dehydrogenase prhI then oxidizes the C-3 alcohol group of the terpene cyclase product to transform protoaustinoid A into protoaustinoid B. The FAD-binding monooxygenase prhJ catalyzes the oxidation of protoaustinoid B into preaustinoid A which is further oxidized into preaustinoid A1 by FAD-binding monooxygenase phrK. Finally, prhA leads to berkeleydione via the berkeleyone B intermediate. PrhA is a multifunctional dioxygenase that first desaturates at C5-C6 to form berkeleyone B, followed by rearrangement of the A/B-ring to form the cycloheptadiene moiety in berkeleydione. Berkeleydione serves as the key intermediate for the biosynthesis of paraherquonin as well as many other meroterpenoids. The cytochrome P450 monooxygenases prhB, prhD, and prhN, as well as the isomerase prhC, are probably involved in the late stage of paraherquonin biosynthesis, after the production of berkeleydione. Especially prhC might be a multifunctional enzyme that catalyzes the D-ring expansion via intramolecular methoxy rearrangement, as well as the hydrolysis of the expanded D-ring. This Penicillium brasilianum protein is Short chain dehydrogenase prhI.